A 393-amino-acid polypeptide reads, in one-letter code: MGLILRWKEKKQLSSKQNAQKSRKPANTSFRQQRLKAWQPILSPQSVLPLLILMACVFAPIGIGLVVSTISVQRLVVNYTECDALAPAKHFETIPSEYVDYHFSKKVAVQPQWMVLTDPELGNQTCRIQFEVPNHIKKSTYVYYRLTNFNQNYREYVQSLDLDQLKGKALIGNDLDPNCDPLRTVENKTIFPCGLIANSMFNDTFGTTLTGVNDTADYLLTTKGIAWDTDSHRYGKTEYNASDIVPPPNWAKLFPNGYTDDNIPDLQNWEQFKIWMRTAALPNFYKLAMKNETNGLGKGIYIADIELNYPVRSFYGTKSFVLTTNSIIGAGNEALGIVYLIVAGIATLFAILFLIKVIFKPRPMHDHSYLNFENSDTPFDESSVVSIPLREIL.

Residues 1–46 (MGLILRWKEKKQLSSKQNAQKSRKPANTSFRQQRLKAWQPILSPQS) are Cytoplasmic-facing. The helical transmembrane segment at 47 to 67 (VLPLLILMACVFAPIGIGLVV) threads the bilayer. Residues 68 to 334 (STISVQRLVV…NSIIGAGNEA (267 aa)) lie on the Lumenal side of the membrane. Residues 70-332 (ISVQRLVVNY…TTNSIIGAGN (263 aa)) form a confers specificity for binding DNF3 region. Asn-78, Asn-123, Asn-187, Asn-202, Asn-213, Asn-240, and Asn-291 each carry an N-linked (GlcNAc...) asparagine glycan. 2 disulfides stabilise this stretch: Cys-82-Cys-126 and Cys-179-Cys-193. Residues 335–355 (LGIVYLIVAGIATLFAILFLI) form a helical membrane-spanning segment. Residues 356 to 393 (KVIFKPRPMHDHSYLNFENSDTPFDESSVVSIPLREIL) are Cytoplasmic-facing.

The protein belongs to the CDC50/LEM3 family. Component of a flippase complex consisting of DNF3 and YNR048W/CRF1. Interacts with DNF3; the interaction is direct and required for proper expression and endoplasmic reticulum (ER) export of either partner.

It is found in the golgi apparatus. Its subcellular location is the trans-Golgi network membrane. Its function is as follows. Accessory component of a P4-ATPase flippase complex which catalyzes the hydrolysis of ATP coupled to the transport of phosphatidylcholine and small amounts of phosphatidylethanolamine from the lumen to the cytosolic leaflet of the trans-Golgi network and ensures the maintenance of asymmetric distribution of phospholipids. May be involved in transport from early endosomes to the trans-Golgi network (TGN). In Saccharomyces cerevisiae (strain ATCC 204508 / S288c) (Baker's yeast), this protein is Phospholipid-transporting ATPase accessory subunit CRF1.